A 121-amino-acid chain; its full sequence is Flagellar hook-basal body complex protein FliE (121 aa).

Belongs to the FliE family.

Its subcellular location is the bacterial flagellum basal body. The chain is Flagellar hook-basal body complex protein FliE from Saccharophagus degradans (strain 2-40 / ATCC 43961 / DSM 17024).